The primary structure comprises 30 residues: Cycloviolacin-O9 (30 aa).

Residues 1-30 (GIPCGESCVWIPCLTSAVGCSCKSKVCYRN) constitute a cross-link (cyclopeptide (Gly-Asn)). 3 cysteine pairs are disulfide-bonded: cysteine 4/cysteine 20, cysteine 8/cysteine 22, and cysteine 13/cysteine 27.

This is a cyclic peptide.

Probably participates in a plant defense mechanism. The chain is Cycloviolacin-O9 from Viola odorata (Sweet violet).